Reading from the N-terminus, the 1796-residue chain is Y' element ATP-dependent helicase protein 1 copy 5 (1796 aa).

The tract at residues 743–767 (AGEAASSDHDQKISRVTRKRPREPK) is disordered. A Helicase ATP-binding domain is found at 797-974 (EIYMADTPSV…LQRIGLTGLA (178 aa)). Residue 810-817 (APPGYGKT) participates in ATP binding. One can recognise a Helicase C-terminal domain in the interval 1031–1180 (KLLLALFEIE…EFYGLESKKG (150 aa)). Disordered stretches follow at residues 1254 to 1278 (ANAS…NVRT) and 1294 to 1421 (TTES…DINK). A compositionally biased stretch (low complexity) spans 1294–1397 (TTESTNSSTN…ATTTESTNAS (104 aa)). Over residues 1398 to 1421 (AKEDANKDGNAEDNRFHPVTDINK) the composition is skewed to basic and acidic residues.

The protein belongs to the helicase family. Yeast subtelomeric Y' repeat subfamily.

Catalyzes DNA unwinding and is involved in telomerase-independent telomere maintenance. This is Y' element ATP-dependent helicase protein 1 copy 5 (YRF1-5) from Saccharomyces cerevisiae (strain ATCC 204508 / S288c) (Baker's yeast).